We begin with the raw amino-acid sequence, 423 residues long: Cyclin-dependent kinase 14 (423 aa).

The disordered stretch occupies residues 62 to 85 (VGKESPKVRRHSSPSSPTSPKFGK). A Protein kinase domain is found at 89-373 (YEKLEKLGEG…AQAALNHDYF (285 aa)). ATP-binding positions include 95-103 (LGEGSYATV) and Lys-118. The active-site Proton acceptor is the Asp-210.

It belongs to the protein kinase superfamily. CMGC Ser/Thr protein kinase family. CDC2/CDKX subfamily. As to quaternary structure, interacts with ccny; ccny mediates its recruitment to the plasma membrane and promotes phosphorylation of lrp6.

Its subcellular location is the cell membrane. The enzyme catalyses L-seryl-[protein] + ATP = O-phospho-L-seryl-[protein] + ADP + H(+). It catalyses the reaction L-threonyl-[protein] + ATP = O-phospho-L-threonyl-[protein] + ADP + H(+). Its function is as follows. Serine/threonine-protein kinase involved in the control of the eukaryotic cell cycle, whose activity is controlled by an associated cyclin. Acts as a cell-cycle regulator of Wnt signaling pathway during G2/M phase by mediating the phosphorylation of lrp6, leading to the activation of the Wnt signaling pathway. The protein is Cyclin-dependent kinase 14 (cdk14) of Xenopus tropicalis (Western clawed frog).